Reading from the N-terminus, the 218-residue chain is Probable cutinase 3 (218 aa).

Positions 1–17 (MSLRSVLVAALAALAVA) are cleaved as a signal peptide. Intrachain disulfides connect cysteine 41–cysteine 120 and cysteine 67–cysteine 81. The active-site Nucleophile is the serine 131. Residues cysteine 182 and cysteine 189 are joined by a disulfide bond. Residue aspartate 186 is part of the active site. Histidine 199 (proton donor/acceptor) is an active-site residue.

It belongs to the cutinase family.

It is found in the secreted. The catalysed reaction is cutin + H2O = cutin monomers.. Catalyzes the hydrolysis of complex carboxylic polyesters found in the cell wall of plants. Degrades cutin, a macromolecule that forms the structure of the plant cuticle. The protein is Probable cutinase 3 of Aspergillus terreus (strain NIH 2624 / FGSC A1156).